Reading from the N-terminus, the 243-residue chain is Probable 2-phosphosulfolactate phosphatase (243 aa).

Belongs to the ComB family. The cofactor is Mg(2+).

The catalysed reaction is (2R)-O-phospho-3-sulfolactate + H2O = (2R)-3-sulfolactate + phosphate. This Prochlorococcus marinus (strain MIT 9303) protein is Probable 2-phosphosulfolactate phosphatase.